Consider the following 347-residue polypeptide: MTQKLAVVLFNLGGPDGPDAVRPFLFNLFRDPAIIGAPALIRYPLAALISTTREKSAKANYAIMGGGSPLLPETEKQARALEAALALAMPGVEAKCFIAMRYWHPLTDETARQVAAFAPDQVVLLPLYPQFSTTTTGSSLKAWKKTYKGSGVQTTVGCYPTEGGLIEAHARMIRESWEKAGSPTNIRLLFSAHGLPEKVILAGDPYQKQVEATAAAVAAHLPPQIEWTVCYQSRVGPLKWIGPSTDDEIRRAGGEDKGVMITPIAFVSEHVETLVELDHEYAELAEEVGAAPYLRVSALGTAPEFIDGLAKAVRDSVGKAPGTVSSACGWRCGADWSKCPCREGASA.

Cysteine 158 is a binding site for [2Fe-2S] cluster. Fe cation contacts are provided by histidine 193 and glutamate 272. Positions 332, 339, and 341 each coordinate [2Fe-2S] cluster.

The protein belongs to the ferrochelatase family. In terms of assembly, homodimer. The cofactor is [2Fe-2S] cluster.

It localises to the cytoplasm. It carries out the reaction heme b + 2 H(+) = protoporphyrin IX + Fe(2+). The protein operates within porphyrin-containing compound metabolism; protoheme biosynthesis; protoheme from protoporphyrin-IX: step 1/1. Catalyzes the ferrous insertion into protoporphyrin IX. This chain is Ferrochelatase, found in Caulobacter vibrioides (strain ATCC 19089 / CIP 103742 / CB 15) (Caulobacter crescentus).